The sequence spans 515 residues: Pescadillo homolog (515 aa).

A coiled-coil region spans residues 270–327 (EVLAALNHTLKIIQTQEEDLEVDEFPIDPNSEDAEAIQAQKEEETKLERLKNLFSECK). Residues 318-411 (RLKNLFSECK…KLLPVEEYFP (94 aa)) enclose the BRCT domain. The tract at residues 477 to 515 (RLYEKIMHSKKKKRSEVRKLESKRKVHDEEKAKKKLKSS) is disordered. The span at 484-501 (HSKKKKRSEVRKLESKRK) shows a compositional bias: basic residues.

This sequence belongs to the pescadillo family.

The protein resides in the nucleus. Its subcellular location is the nucleolus. The protein localises to the nucleoplasm. In terms of biological role, required for maturation of ribosomal RNAs and formation of the large ribosomal subunit. This chain is Pescadillo homolog, found in Nematostella vectensis (Starlet sea anemone).